A 677-amino-acid chain; its full sequence is Methionine--tRNA ligase (677 aa).

Positions 15-25 (PYANGSIHLGH) match the 'HIGH' region motif. Zn(2+)-binding residues include Cys-146, Cys-149, Cys-159, and Cys-162. The short motif at 333–337 (KMSKS) is the 'KMSKS' region element. Lys-336 serves as a coordination point for ATP. The region spanning 575 to 677 (DFAKVDLRVA…AGAKPGHQVK (103 aa)) is the tRNA-binding domain.

The protein belongs to the class-I aminoacyl-tRNA synthetase family. MetG type 1 subfamily. Homodimer. It depends on Zn(2+) as a cofactor.

The protein localises to the cytoplasm. It carries out the reaction tRNA(Met) + L-methionine + ATP = L-methionyl-tRNA(Met) + AMP + diphosphate. Is required not only for elongation of protein synthesis but also for the initiation of all mRNA translation through initiator tRNA(fMet) aminoacylation. In Escherichia coli (strain K12), this protein is Methionine--tRNA ligase (metG).